A 317-amino-acid chain; its full sequence is Ribosomal lysine N-methyltransferase 5 (317 aa).

S-adenosyl-L-methionine contacts are provided by residues W87, 141–143, D163, W214, and L237; that span reads GSG.

Belongs to the class I-like SAM-binding methyltransferase superfamily. RKM5 family.

Its function is as follows. S-adenosyl-L-methionine-dependent protein-lysine N-methyltransferase that methylates 60S ribosomal protein L1. The polypeptide is Ribosomal lysine N-methyltransferase 5 (RKM5) (Eremothecium gossypii (strain ATCC 10895 / CBS 109.51 / FGSC 9923 / NRRL Y-1056) (Yeast)).